We begin with the raw amino-acid sequence, 98 residues long: NADH-ubiquinone oxidoreductase chain 4L (98 aa).

A run of 3 helical transmembrane segments spans residues 2-22 (PSIS…MLMF), 29-49 (SLLC…LTIL), and 61-81 (ILLL…LVMV).

This sequence belongs to the complex I subunit 4L family. Core subunit of respiratory chain NADH dehydrogenase (Complex I) which is composed of 45 different subunits.

The protein resides in the mitochondrion inner membrane. The catalysed reaction is a ubiquinone + NADH + 5 H(+)(in) = a ubiquinol + NAD(+) + 4 H(+)(out). Core subunit of the mitochondrial membrane respiratory chain NADH dehydrogenase (Complex I) which catalyzes electron transfer from NADH through the respiratory chain, using ubiquinone as an electron acceptor. Part of the enzyme membrane arm which is embedded in the lipid bilayer and involved in proton translocation. This Microcebus mittermeieri (Mittermeier's mouse lemur) protein is NADH-ubiquinone oxidoreductase chain 4L (MT-ND4L).